The following is a 297-amino-acid chain: 4-hydroxy-tetrahydrodipicolinate synthase (297 aa).

Pyruvate is bound at residue T49. Y137 functions as the Proton donor/acceptor in the catalytic mechanism. The Schiff-base intermediate with substrate role is filled by K166. I208 lines the pyruvate pocket.

This sequence belongs to the DapA family. As to quaternary structure, homotetramer; dimer of dimers.

It localises to the cytoplasm. It carries out the reaction L-aspartate 4-semialdehyde + pyruvate = (2S,4S)-4-hydroxy-2,3,4,5-tetrahydrodipicolinate + H2O + H(+). Its pathway is amino-acid biosynthesis; L-lysine biosynthesis via DAP pathway; (S)-tetrahydrodipicolinate from L-aspartate: step 3/4. Catalyzes the condensation of (S)-aspartate-beta-semialdehyde [(S)-ASA] and pyruvate to 4-hydroxy-tetrahydrodipicolinate (HTPA). This Prosthecochloris aestuarii (strain DSM 271 / SK 413) protein is 4-hydroxy-tetrahydrodipicolinate synthase.